Reading from the N-terminus, the 440-residue chain is MAKPIVAIVGRPNVGKSTLFNKIIGHRISIVEDQPGVTRDRIYAEVEWLDHYFTLIDTGGIDADTEEIIPAQMREQAQLAIETADVTVFMVDGRAGLTTSDREVAEMLRKSHKPVLLAMNKVDTSNRLDSFYEFYELGIGDPIEISSAQGLGIGDLLDEIVKHFPENKGVIYDDDVIKVAIIGKPNVGKSSIVNSILGENRVIVSDIAGTTRDAIDTPFNDGEDQYVLIDTAGLRRKSKIKENIEKYSVIRSIAAVERADVCLLVIDATEGVTEQDTKVAGFSHENGKGTIIVVNKWDLIEKDNNTMNKFIKEIRTELAYLSYAPILFISALTRQRMPKVLETVKFISNQRAMRVPTGGLNEVIGEATLLNQPPSDKGKRLKIFYGTQGSIKPPTFVLFINDKKLMHFSYERYIENRIRENFGFEGTPIRFIYREKSGRD.

EngA-type G domains follow at residues 4–168 and 177–352; these read PIVA…PENK and IKVA…NQRA. Residues 10 to 17, 57 to 61, 120 to 123, 183 to 190, 230 to 234, and 295 to 298 each bind GTP; these read GRPNVGKS, DTGGI, NKVD, GKPNVGKS, DTAGL, and NKWD. In terms of domain architecture, KH-like spans 353 to 437; sequence MRVPTGGLNE…PIRFIYREKS (85 aa).

It belongs to the TRAFAC class TrmE-Era-EngA-EngB-Septin-like GTPase superfamily. EngA (Der) GTPase family. In terms of assembly, associates with the 50S ribosomal subunit.

In terms of biological role, GTPase that plays an essential role in the late steps of ribosome biogenesis. This Alkaliphilus metalliredigens (strain QYMF) protein is GTPase Der.